A 2185-amino-acid chain; its full sequence is Genome polyprotein (2185 aa).

Gly-2 carries the N-myristoyl glycine; by host lipid modification. Topologically, residues 2–1495 (GAQVSTQKTG…HVSRAFICLQ (1494 aa)) are cytoplasmic. The segment at 566 to 582 (FYQGPPGEAVERAIARV) is amphipathic alpha-helix. Catalysis depends on for protease 2A activity residues His-872 and Asp-890. The Zn(2+) site is built by Cys-907 and Cys-909. Cys-961 acts as the For protease 2A activity in catalysis. Zn(2+)-binding residues include Cys-967 and His-969. Residues 1101 to 1173 (NNNWLKKFTE…EQSAPSQSDQ (73 aa)) form a membrane-binding region. Residues 1101–1239 (NNNWLKKFTE…SPGAGKSVAT (139 aa)) are oligomerization. Residues 1122–1126 (AVKIQ) form an RNA-binding region. The 157-residue stretch at 1205–1361 (EKKMSNYIQF…SMYSQNGKIN (157 aa)) folds into the SF3 helicase domain. Positions 1369, 1381, and 1386 each coordinate Zn(2+). A C4-type; degenerate zinc finger spans residues 1369–1386 (CDEECCPVNFKRCCPLVC). The tract at residues 1413 to 1420 (EYNHRHSV) is RNA-binding. Positions 1424-1429 (LEALFQ) are oligomerization. Residues 1496-1511 (ALTTFVSVAGIIYIIY) lie within the membrane without spanning it. Topologically, residues 1512-2185 (KLFAGFQGAY…TLRRKWLDSF (674 aa)) are cytoplasmic. Position 1521 is an O-(5'-phospho-RNA)-tyrosine (Tyr-1521). Positions 1541–1719 (GPAFEFAVAM…FSAALLKHYF (179 aa)) constitute a Peptidase C3 domain. Residues His-1580, Glu-1611, and Cys-1687 each act as for protease 3C activity in the active site. The 117-residue stretch at 1950-2066 (GHLIAFDYSG…SYPWPIDASL (117 aa)) folds into the RdRp catalytic domain. Mg(2+) is bound by residues Asp-1956 and Asp-2052.

It belongs to the picornaviruses polyprotein family. In terms of assembly, interacts with capsid protein VP1 and capsid protein VP3 to form heterotrimeric protomers. Interacts with capsid protein VP0, and capsid protein VP3 to form heterotrimeric protomers. Five protomers subsequently associate to form pentamers which serve as building blocks for the capsid. Interacts with capsid protein VP2, capsid protein VP3 and capsid protein VP4 following cleavage of capsid protein VP0. As to quaternary structure, interacts with capsid protein VP1 and capsid protein VP3 in the mature capsid. In terms of assembly, interacts with capsid protein VP0 and capsid protein VP1 to form heterotrimeric protomers. Five protomers subsequently associate to form pentamers which serve as building blocks for the capsid. Interacts with capsid protein VP4 in the mature capsid. Interacts with protein 2C; this interaction may be important for virion morphogenesis. Interacts with capsid protein VP1 and capsid protein VP3. As to quaternary structure, homodimer. In terms of assembly, homohexamer; forms a hexameric ring structure with 6-fold symmetry characteristic of AAA+ ATPases. Interacts (via N-terminus) with host RTN3 (via reticulon domain); this interaction is important for viral replication. Interacts with capsid protein VP3; this interaction may be important for virion morphogenesis. Interacts with protein 3CD. As to quaternary structure, homodimer. Interacts with host GBF1. Interacts (via GOLD domain) with host ACBD3 (via GOLD domain); this interaction allows the formation of a viral protein 3A/ACBD3 heterotetramer with a 2:2 stoichiometry, which will stimulate the recruitment of host PI4KB in order to synthesize PI4P at the viral RNA replication sites. In terms of assembly, interacts with RNA-directed RNA polymerase. Interacts with protein 3AB and with RNA-directed RNA polymerase. As to quaternary structure, interacts with Viral protein genome-linked and with protein 3CD. Requires Mg(2+) as cofactor. Specific enzymatic cleavages in vivo by the viral proteases yield processing intermediates and the mature proteins. In terms of processing, myristoylation is required for the formation of pentamers during virus assembly. Further assembly of 12 pentamers and a molecule of genomic RNA generates the provirion. Post-translationally, during virion maturation, immature virions are rendered infectious following cleavage of VP0 into VP4 and VP2. This maturation seems to be an autocatalytic event triggered by the presence of RNA in the capsid and it is followed by a conformational change infectious virion. Myristoylation is required during RNA encapsidation and formation of the mature virus particle. In terms of processing, VPg is uridylylated by the polymerase into VPg-pUpU. This acts as a nucleotide-peptide primer for the genomic RNA replication.

It localises to the virion. The protein localises to the host cytoplasm. It is found in the host cytoplasmic vesicle membrane. Its subcellular location is the host nucleus. The catalysed reaction is a ribonucleoside 5'-triphosphate + H2O = a ribonucleoside 5'-diphosphate + phosphate + H(+). It carries out the reaction Selective cleavage of Tyr-|-Gly bond in the picornavirus polyprotein.. It catalyses the reaction RNA(n) + a ribonucleoside 5'-triphosphate = RNA(n+1) + diphosphate. The enzyme catalyses Selective cleavage of Gln-|-Gly bond in the poliovirus polyprotein. In other picornavirus reactions Glu may be substituted for Gln, and Ser or Thr for Gly.. Replication or transcription is subject to high level of random mutations by the nucleotide analog ribavirin. In terms of biological role, forms an icosahedral capsid of pseudo T=3 symmetry with capsid proteins VP2 and VP3. The capsid is 300 Angstroms in diameter, composed of 60 copies of each capsid protein and enclosing the viral positive strand RNA genome. Capsid protein VP1 mainly forms the vertices of the capsid. Capsid protein VP1 interacts with host cell receptor to provide virion attachment to target host cells. This attachment induces virion internalization. Tyrosine kinases are probably involved in the entry process. After binding to its receptor, the capsid undergoes conformational changes. Capsid protein VP1 N-terminus (that contains an amphipathic alpha-helix) and capsid protein VP4 are externalized. Together, they shape a pore in the host membrane through which viral genome is translocated to host cell cytoplasm. Functionally, forms an icosahedral capsid of pseudo T=3 symmetry with capsid proteins VP2 and VP3. The capsid is 300 Angstroms in diameter, composed of 60 copies of each capsid protein and enclosing the viral positive strand RNA genome. Its function is as follows. Lies on the inner surface of the capsid shell. After binding to the host receptor, the capsid undergoes conformational changes. Capsid protein VP4 is released, Capsid protein VP1 N-terminus is externalized, and together, they shape a pore in the host membrane through which the viral genome is translocated into the host cell cytoplasm. Component of immature procapsids, which is cleaved into capsid proteins VP4 and VP2 after maturation. Allows the capsid to remain inactive before the maturation step. In terms of biological role, cysteine protease that cleaves viral polyprotein and specific host proteins. It is responsible for the autocatalytic cleavage between the P1 and P2 regions, which is the first cleavage occurring in the polyprotein. Also cleaves the host translation initiation factor EIF4G1, in order to shut down the capped cellular mRNA translation. Inhibits the host nucleus-cytoplasm protein and RNA trafficking by cleaving host members of the nuclear pores. Counteracts stress granule formation probably by antagonizing its assembly or promoting its dissassembly. Cleaves and inhibits host IFIH1/MDA5, thereby inhibiting the type-I IFN production and the establishment of the antiviral state. Cleaves and inhibits host MAVS, thereby inhibiting the type-I IFN production and the establishment of the antiviral state. Functionally, plays an essential role in the virus replication cycle by acting as a viroporin. Creates a pore in the host endoplasmic reticulum and as a consequence releases Ca2+ in the cytoplasm of infected cell. In turn, high levels of cytoplasmic calcium may trigger membrane trafficking and transport of viral ER-associated proteins to viroplasms, sites of viral genome replication. Its function is as follows. Induces and associates with structural rearrangements of intracellular membranes. Displays RNA-binding, nucleotide binding and NTPase activities. May play a role in virion morphogenesis and viral RNA encapsidation by interacting with the capsid protein VP3. Localizes the viral replication complex to the surface of membranous vesicles. Together with protein 3CD binds the Cis-Active RNA Element (CRE) which is involved in RNA synthesis initiation. Acts as a cofactor to stimulate the activity of 3D polymerase, maybe through a nucleid acid chaperone activity. In terms of biological role, localizes the viral replication complex to the surface of membranous vesicles. It inhibits host cell endoplasmic reticulum-to-Golgi apparatus transport and causes the disassembly of the Golgi complex, possibly through GBF1 interaction. This would result in depletion of MHC, trail receptors and IFN receptors at the host cell surface. Plays an essential role in viral RNA replication by recruiting ACBD3 and PI4KB at the viral replication sites, thereby allowing the formation of the rearranged membranous structures where viral replication takes place. Functionally, acts as a primer for viral RNA replication and remains covalently bound to viral genomic RNA. VPg is uridylylated prior to priming replication into VPg-pUpU. The oriI viral genomic sequence may act as a template for this. The VPg-pUpU is then used as primer on the genomic RNA poly(A) by the RNA-dependent RNA polymerase to replicate the viral genome. During genome replication, the VPg-RNA linkage is removed by the host TDP2, thereby accelerating replication. During the late stage of the replication cycle, host TDP2 is excluded from sites of viral RNA synthesis and encapsidation, allowing for the generation of progeny virions. Its function is as follows. Involved in the viral replication complex and viral polypeptide maturation. It exhibits protease activity with a specificity and catalytic efficiency that is different from protease 3C. Protein 3CD lacks polymerase activity. Protein 3CD binds to the 5'UTR of the viral genome. Replicates the viral genomic RNA on the surface of intracellular membranes. May form linear arrays of subunits that propagate along a strong head-to-tail interaction called interface-I. Covalently attaches UMP to a tyrosine of VPg, which is used to prime RNA synthesis. The positive stranded RNA genome is first replicated at virus induced membranous vesicles, creating a dsRNA genomic replication form. This dsRNA is then used as template to synthesize positive stranded RNA genomes. ss(+)RNA genomes are either translated, replicated or encapsidated. In terms of biological role, major viral protease that mediates proteolytic processing of the polyprotein. Cleaves host EIF5B, contributing to host translation shutoff. Also cleaves host PABPC1, contributing to host translation shutoff. Cleaves host NLRP1, triggers host N-glycine-mediated degradation of the autoinhibitory NLRP1 N-terminal fragment. The chain is Genome polyprotein from Homo sapiens (Human).